The sequence spans 372 residues: DNA replication and repair protein RecF (372 aa).

Residue 30–37 participates in ATP binding; it reads GENGQGKT.

This sequence belongs to the RecF family.

It is found in the cytoplasm. In terms of biological role, the RecF protein is involved in DNA metabolism; it is required for DNA replication and normal SOS inducibility. RecF binds preferentially to single-stranded, linear DNA. It also seems to bind ATP. The polypeptide is DNA replication and repair protein RecF (Anaeromyxobacter dehalogenans (strain 2CP-C)).